Here is a 226-residue protein sequence, read N- to C-terminus: Uracil-DNA glycosylase (226 aa).

Asp-64 serves as the catalytic Proton acceptor.

This sequence belongs to the uracil-DNA glycosylase (UDG) superfamily. UNG family.

It localises to the cytoplasm. It catalyses the reaction Hydrolyzes single-stranded DNA or mismatched double-stranded DNA and polynucleotides, releasing free uracil.. Functionally, excises uracil residues from the DNA which can arise as a result of misincorporation of dUMP residues by DNA polymerase or due to deamination of cytosine. This is Uracil-DNA glycosylase from Vibrio cholerae serotype O1 (strain ATCC 39541 / Classical Ogawa 395 / O395).